We begin with the raw amino-acid sequence, 124 residues long: uncharacterized protein (124 aa).

Residues 73 to 94 form a dksA C4-type; degenerate zinc finger; that stretch reads CEETGAPIPLAKLAVLPTARTA.

This is an uncharacterized protein from Bacillus subtilis (strain 168).